The chain runs to 335 residues: Dihydroorotate dehydrogenase (quinone) (335 aa).

FMN-binding positions include 61–65 (AGLDK) and T85. K65 contributes to the substrate binding site. 110-114 (NRMGF) lines the substrate pocket. Positions 138 and 171 each coordinate FMN. A substrate-binding site is contributed by N171. The active-site Nucleophile is the S174. N176 serves as a coordination point for substrate. Residues K216 and T244 each coordinate FMN. Position 245-246 (245-246 (NT)) interacts with substrate. FMN-binding positions include G267, G296, and 317-318 (YS).

The protein belongs to the dihydroorotate dehydrogenase family. Type 2 subfamily. In terms of assembly, monomer. The cofactor is FMN.

It is found in the cell membrane. It catalyses the reaction (S)-dihydroorotate + a quinone = orotate + a quinol. The protein operates within pyrimidine metabolism; UMP biosynthesis via de novo pathway; orotate from (S)-dihydroorotate (quinone route): step 1/1. Functionally, catalyzes the conversion of dihydroorotate to orotate with quinone as electron acceptor. The chain is Dihydroorotate dehydrogenase (quinone) from Pseudoalteromonas atlantica (strain T6c / ATCC BAA-1087).